Here is a 381-residue protein sequence, read N- to C-terminus: Succinyl-diaminopimelate desuccinylase (381 aa).

H68 contacts Zn(2+). Residue D70 is part of the active site. Position 101 (D101) interacts with Zn(2+). The active-site Proton acceptor is E135. Zn(2+) is bound by residues E136, E164, and H350.

It belongs to the peptidase M20A family. DapE subfamily. In terms of assembly, homodimer. Requires Zn(2+) as cofactor. The cofactor is Co(2+).

It catalyses the reaction N-succinyl-(2S,6S)-2,6-diaminopimelate + H2O = (2S,6S)-2,6-diaminopimelate + succinate. The protein operates within amino-acid biosynthesis; L-lysine biosynthesis via DAP pathway; LL-2,6-diaminopimelate from (S)-tetrahydrodipicolinate (succinylase route): step 3/3. Its function is as follows. Catalyzes the hydrolysis of N-succinyl-L,L-diaminopimelic acid (SDAP), forming succinate and LL-2,6-diaminopimelate (DAP), an intermediate involved in the bacterial biosynthesis of lysine and meso-diaminopimelic acid, an essential component of bacterial cell walls. The protein is Succinyl-diaminopimelate desuccinylase of Neisseria gonorrhoeae (strain NCCP11945).